Here is a 912-residue protein sequence, read N- to C-terminus: Receptor protein kinase WSS1 (912 aa).

The N-terminal stretch at Met1–Ser27 is a signal peptide. The Extracellular portion of the chain corresponds to Ala28–Thr477. LRR repeat units follow at residues Ala64–Leu88, Thr89–Met111, and Gly112–Gly134. N-linked (GlcNAc...) asparagine glycans are attached at residues Asn159, Asn170, Asn196, Asn256, Asn286, Asn371, Asn376, Asn387, and Asn400. 6 LRR repeats span residues Leu184–Leu208, Met235–Glu261, Leu281–Ala303, Ser364–Leu388, Thr389–Thr411, and Pro413–Val438. The segment at Ser448 to Lys472 is disordered. The chain crosses the membrane as a helical span at residues Gly478–Val498. The Cytoplasmic portion of the chain corresponds to His499–Gly912. A Protein kinase domain is found at Phe580–Val859. ATP-binding positions include Leu586–Val594 and Lys607. Asp708 serves as the catalytic Proton acceptor.

This sequence belongs to the protein kinase superfamily. Ser/Thr protein kinase family. It depends on Mn(2+) as a cofactor. In terms of tissue distribution, expressed in young and mature leaves.

The protein localises to the cell membrane. The enzyme catalyses L-seryl-[protein] + ATP = O-phospho-L-seryl-[protein] + ADP + H(+). The catalysed reaction is L-threonyl-[protein] + ATP = O-phospho-L-threonyl-[protein] + ADP + H(+). In terms of biological role, transmembrane kinase receptor involved in the regulation of reactive oxygen species (ROS) homeostasis, chloroplast development and leaf senescence. The sequence is that of Receptor protein kinase WSS1 from Oryza sativa subsp. japonica (Rice).